A 105-amino-acid polypeptide reads, in one-letter code: Protein RALF-like 21 (105 aa).

The N-terminal stretch at Met-1–Gly-30 is a signal peptide. 2 cysteine pairs are disulfide-bonded: Cys-44-Cys-53 and Cys-67-Cys-73.

This sequence belongs to the plant rapid alkalinization factor (RALF) family. In terms of tissue distribution, expressed in seeds and rosettes.

The protein localises to the secreted. Functionally, cell signaling peptide that may regulate plant stress, growth, and development. Mediates a rapid alkalinization of extracellular space by mediating a transient increase in the cytoplasmic Ca(2+) concentration leading to a calcium-dependent signaling events through a cell surface receptor and a concomitant activation of some intracellular mitogen-activated protein kinases. This is Protein RALF-like 21 (RALFL21) from Arabidopsis thaliana (Mouse-ear cress).